We begin with the raw amino-acid sequence, 480 residues long: Sensor histidine kinase CusS (480 aa).

Over 1–15 the chain is Cytoplasmic; that stretch reads MVSKPFQRPFSLATR. The chain crosses the membrane as a helical span at residues 16-36; sequence LTFFISLATIAAFFAFAWIMI. Over 37–186 the chain is Periplasmic; sequence HSVKVHFAEQ…LHYINDLMNK (150 aa). Residues 187–207 form a helical membrane-spanning segment; the sequence is LIMTASVISILIVFIVLLAVH. The HAMP domain occupies 208-260; sequence KGHAPIRSVSRQIQNITSKDLDVRLDPQTVPIELEQLVLSFNHMIERIEDVFT. Residues 208–480 are Cytoplasmic-facing; it reads KGHAPIRSVS…GTRFVITLPA (273 aa). The Histidine kinase domain maps to 268-480; it reads DIAHEIRTPI…GTRFVITLPA (213 aa). Histidine 271 carries the post-translational modification Phosphohistidine; by autocatalysis.

Post-translationally, autophosphorylated.

The protein resides in the cell inner membrane. The catalysed reaction is ATP + protein L-histidine = ADP + protein N-phospho-L-histidine.. Member of the two-component regulatory system CusS/CusR involved in response to copper and silver. Acts as a copper/silver ion sensor. Activates CusR by phosphorylation. The sequence is that of Sensor histidine kinase CusS (cusS) from Escherichia coli (strain K12).